The sequence spans 67 residues: Conotoxin Cl6.6a (67 aa).

A signal peptide spans 1–24 (MKLTCVLIAAVLLLAVCQLDSADA). A propeptide spanning residues 25–37 (TGYMRKNPSLRSP) is cleaved from the precursor. 3 disulfide bridges follow: cysteine 43-cysteine 57, cysteine 50-cysteine 61, and cysteine 56-cysteine 65.

It belongs to the conotoxin O1 superfamily. Expressed by the venom duct.

It localises to the secreted. This is Conotoxin Cl6.6a from Californiconus californicus (California cone).